We begin with the raw amino-acid sequence, 79 residues long: MKTLLLTLVVVTIVCLDLGNSLVCYVSGAWQKTCPEGQNKCEKYAVGTMHGSWIYLRGCASTCHEGPYNVCCSTDLCNK.

The signal sequence occupies residues 1 to 21; sequence MKTLLLTLVVVTIVCLDLGNS. 4 disulfides stabilise this stretch: Cys-24-Cys-41, Cys-34-Cys-59, Cys-63-Cys-71, and Cys-72-Cys-77.

Belongs to the three-finger toxin family. Short-chain subfamily. In terms of tissue distribution, expressed by the venom gland.

It localises to the secreted. The chain is Three-finger toxin A2 from Micrurus laticollaris (Balsas coral snake).